Consider the following 151-residue polypeptide: Deoxyuridine 5'-triphosphate nucleotidohydrolase (151 aa).

Substrate is bound by residues 70–72, N83, 87–89, and M97; these read RSG and LID.

Belongs to the dUTPase family. Mg(2+) is required as a cofactor.

The enzyme catalyses dUTP + H2O = dUMP + diphosphate + H(+). Its pathway is pyrimidine metabolism; dUMP biosynthesis; dUMP from dCTP (dUTP route): step 2/2. In terms of biological role, this enzyme is involved in nucleotide metabolism: it produces dUMP, the immediate precursor of thymidine nucleotides and it decreases the intracellular concentration of dUTP so that uracil cannot be incorporated into DNA. This is Deoxyuridine 5'-triphosphate nucleotidohydrolase from Shigella flexneri serotype 5b (strain 8401).